Reading from the N-terminus, the 895-residue chain is Glutamate receptor 2.3 (895 aa).

The first 23 residues, 1–23 (MRTEKLFFCILLVFFFCLEFNRG), serve as a signal peptide directing secretion. Over 24 to 582 (QNNGKTLVDV…ILFMKPLSWK (559 aa)) the chain is Extracellular. Residues Asn52, Asn203, Asn266, Asn330, Asn342, Asn477, and Asn542 are each glycosylated (N-linked (GlcNAc...) asparagine). A helical transmembrane segment spans residues 583–603 (LWLTSFISFFLVGCTVWVLEY). The Cytoplasmic segment spans residues 604–610 (KRNPDFS). A helical transmembrane segment spans residues 611–631 (GPPRFQASTICWFAFSTMVFA). Residues 632–635 (PRER) lie on the Cytoplasmic side of the membrane. A helical membrane pass occupies residues 636–656 (VFSFWARALVIAWYFLVLVLT). The Extracellular portion of the chain corresponds to 657–830 (QSYTASLASL…FTSRQLDIDS (174 aa)). A helical membrane pass occupies residues 831–851 (FLFLFVGVLLVCVMALGNFTY). Over 852-895 (CFLAKDQVSYLDKVEMSPCSSSQQMPVKRKTQLNMSQVHDQDSL) the chain is Cytoplasmic. The tract at residues 873 to 895 (SQQMPVKRKTQLNMSQVHDQDSL) is disordered.

The protein belongs to the glutamate-gated ion channel (TC 1.A.10.1) family. As to quaternary structure, may form heteromers. Expressed predominantly in roots.

The protein resides in the membrane. Glutamate-gated receptor that probably acts as a non-selective cation channel. May be involved in light-signal transduction and calcium homeostasis via the regulation of calcium influx into cells. The sequence is that of Glutamate receptor 2.3 (GLR2.3) from Arabidopsis thaliana (Mouse-ear cress).